The chain runs to 168 residues: CDP-archaeol synthase (168 aa).

5 consecutive transmembrane segments (helical) span residues 4–24 (IFEAFWYILPAYFANSSPVVL), 51–71 (GFFGGITVGTVVGTIQHLMFP), 81–101 (VGVAFLLSLGALVGDLIGSFI), 112–132 (PAVGLDQWGFLISALCFAYPL), and 138–158 (GEVLFLLVVTPVIHWLANVFA).

It belongs to the CDP-archaeol synthase family. Mg(2+) serves as cofactor.

The protein resides in the cell membrane. It carries out the reaction 2,3-bis-O-(geranylgeranyl)-sn-glycerol 1-phosphate + CTP + H(+) = CDP-2,3-bis-O-(geranylgeranyl)-sn-glycerol + diphosphate. It participates in membrane lipid metabolism; glycerophospholipid metabolism. Catalyzes the formation of CDP-2,3-bis-(O-geranylgeranyl)-sn-glycerol (CDP-archaeol) from 2,3-bis-(O-geranylgeranyl)-sn-glycerol 1-phosphate (DGGGP) and CTP. This reaction is the third ether-bond-formation step in the biosynthesis of archaeal membrane lipids. The sequence is that of CDP-archaeol synthase from Pyrococcus abyssi (strain GE5 / Orsay).